Here is a 629-residue protein sequence, read N- to C-terminus: Polyadenylate-binding protein, cytoplasmic and nuclear (629 aa).

Positions 1-11 are enriched in polar residues; that stretch reads MSAAETNQLQE. The interval 1–48 is disordered; that stretch reads MSAAETNQLQESMEKLNIGSTTEEQSAAAATTTADQSAEEQGESSGVA. A compositionally biased stretch (low complexity) spans 20 to 36; it reads STTEEQSAAAATTTADQ. RRM domains lie at 52-130, 140-217, 233-310, and 336-413; these read ASLY…WSQR, GNIF…KHIS, TNIY…RAQK, and VNLF…LAQR. Residues 503–534 are disordered; that stretch reads PPQFQQDFNGQNMRPQQQQQQQPRGGYYPNRN. Over residues 505–517 the composition is skewed to polar residues; that stretch reads QFQQDFNGQNMRP. The PABC domain maps to 537-618; it reads SKRDLAAIIS…ALTAFEEYKK (82 aa).

This sequence belongs to the polyadenylate-binding protein type-1 family.

It localises to the cytoplasm. It is found in the nucleus. In terms of biological role, binds the poly(A) tail of mRNA. Appears to be an important mediator of the multiple roles of the poly(A) tail in mRNA biogenesis, stability and translation. In the nucleus, involved in both mRNA cleavage and polyadenylation. Is also required for efficient mRNA export to the cytoplasm. Acts in concert with a poly(A)-specific nuclease (PAN) to affect poly(A) tail shortening, which may occur concomitantly with either nucleocytoplasmic mRNA transport or translational initiation. In the cytoplasm, stimulates translation initiation and regulates mRNA decay through translation termination-coupled poly(A) shortening, probably mediated by PAN. This Candida albicans (strain SC5314 / ATCC MYA-2876) (Yeast) protein is Polyadenylate-binding protein, cytoplasmic and nuclear (PAB1).